The primary structure comprises 327 residues: 2-methoxy-6-polyprenyl-1,4-benzoquinol methylase, mitochondrial (327 aa).

Residues 1 to 49 (MAAPRCCVLWRVCGRGWWRATGHCRLPGCHRSWPWATLGTRSLSQEKRA) constitute a mitochondrion transit peptide. S-adenosyl-L-methionine is bound by residues threonine 117, aspartate 171, and 199–200 (DA).

It belongs to the class I-like SAM-binding methyltransferase superfamily. MenG/UbiE family. As to quaternary structure, component of a multi-subunit COQ enzyme complex, composed of at least COQ3, COQ4, COQ5, COQ6, COQ7 and COQ9. Interacts with PYURF; the interaction is direct, stabilizes COQ5 protein and associates PYURF with COQ enzyme complex.

It is found in the mitochondrion inner membrane. It catalyses the reaction 2-methoxy-6-(all-trans-decaprenyl)benzene-1,4-diol + S-adenosyl-L-methionine = 5-methoxy-2-methyl-3-(all-trans-decaprenyl)benzene-1,4-diol + S-adenosyl-L-homocysteine + H(+). Its pathway is cofactor biosynthesis; ubiquinone biosynthesis. Functionally, methyltransferase required for the conversion of 2-decaprenyl-6-methoxy-1,4-benzoquinol (DDMQH2) to 2-decaprenyl-3-methyl-6-methoxy-1,4-benzoquinol (DMQH2). The protein is 2-methoxy-6-polyprenyl-1,4-benzoquinol methylase, mitochondrial of Mus musculus (Mouse).